A 143-amino-acid chain; its full sequence is Transcriptional regulator MraZ (143 aa).

2 consecutive SpoVT-AbrB domains span residues 5–47 (TYEP…SAEE) and 76–119 (ASDE…DAAA).

The protein belongs to the MraZ family. Forms oligomers.

It is found in the cytoplasm. Its subcellular location is the nucleoid. This is Transcriptional regulator MraZ from Kocuria rhizophila (strain ATCC 9341 / DSM 348 / NBRC 103217 / DC2201).